The sequence spans 244 residues: Ubiquinone/menaquinone biosynthesis C-methyltransferase UbiE (244 aa).

S-adenosyl-L-methionine contacts are provided by residues threonine 70, aspartate 91, and 117 to 118 (DA).

It belongs to the class I-like SAM-binding methyltransferase superfamily. MenG/UbiE family.

The catalysed reaction is a 2-demethylmenaquinol + S-adenosyl-L-methionine = a menaquinol + S-adenosyl-L-homocysteine + H(+). It catalyses the reaction a 2-methoxy-6-(all-trans-polyprenyl)benzene-1,4-diol + S-adenosyl-L-methionine = a 5-methoxy-2-methyl-3-(all-trans-polyprenyl)benzene-1,4-diol + S-adenosyl-L-homocysteine + H(+). It functions in the pathway quinol/quinone metabolism; menaquinone biosynthesis; menaquinol from 1,4-dihydroxy-2-naphthoate: step 2/2. It participates in cofactor biosynthesis; ubiquinone biosynthesis. In terms of biological role, methyltransferase required for the conversion of demethylmenaquinol (DMKH2) to menaquinol (MKH2) and the conversion of 2-polyprenyl-6-methoxy-1,4-benzoquinol (DDMQH2) to 2-polyprenyl-3-methyl-6-methoxy-1,4-benzoquinol (DMQH2). The protein is Ubiquinone/menaquinone biosynthesis C-methyltransferase UbiE of Chromobacterium violaceum (strain ATCC 12472 / DSM 30191 / JCM 1249 / CCUG 213 / NBRC 12614 / NCIMB 9131 / NCTC 9757 / MK).